The chain runs to 547 residues: Smu-2 suppressor of mec-8 and unc-52 protein (547 aa).

5 disordered regions span residues 18-125 (TSAR…AQDQ), 164-202 (IDKSDDDDDDDIDTAFDEKVTSSSSSSKPSEASLLAQEL), 288-459 (AEPK…AGPK), 496-515 (NGEGGRKNKKQSAVSDAKRL), and 524-547 (KIMDKRKAGGDGAGGGGDYKKPKY). Basic and acidic residues predominate over residues 34–44 (ADPKTGDDKPA). Residues 45–58 (SFKHKHLKPAKFKK) are compositionally biased toward basic residues. Residues 66 to 94 (KAKKEKTEADEDEAALKNILKNYRDRAAE) are a coiled coil. Over residues 87 to 106 (NYRDRAAERRKQGDEKEDPS) the composition is skewed to basic and acidic residues. Positions 163–223 (EIDKSDDDDD…SLHRVLFKNE (61 aa)) are required and sufficient for interaction with smu-1. Over residues 166 to 178 (KSDDDDDDDIDTA) the composition is skewed to acidic residues. 2 stretches are compositionally biased toward low complexity: residues 185-196 (SSSSSSKPSEAS) and 307-317 (APGAAAAAPGA). Positions 330–423 (VPSRKSRDSR…EREKKRKELE (94 aa)) are enriched in basic and acidic residues. Repeat copies occupy residues 336 to 337 (RD), 339 to 340 (RD), 348 to 349 (RD), 350 to 351 (RS), 352 to 353 (RD), 354 to 355 (RS), 356 to 357 (RD), 358 to 359 (RD), 360 to 361 (RD), 362 to 363 (RD), 364 to 365 (RD), and 367 to 368 (RD). Positions 336–368 (RDSRDAGRRGSRRDRSRDRSRDRDRDRDRDNRD) are 12 X 2 AA repeats of R-[DS]. A coiled-coil region spans residues 371-427 (FEKSANSRREEEQNRREQQRERERAEQERRREREKEREQEKAKEREKKRKELEESSG).

This sequence belongs to the RED family. In terms of assembly, probable component of the spliceosome. Heterotetramer with smu-1. The smu-1 homodimer interacts (via the N-terminal region including the LisH and CTLH domains) with smu-2, giving rise to a heterotetramer. Ubiquitous.

The protein localises to the nucleus. Functionally, auxiliary spliceosomal protein that regulates selection of alternative splice sites in a small set of target pre-mRNA species. Selectively regulates alternative splicing of unc-52 exon 17. Thus, smu-2 mutants selectively suppress the effects of unc-52 nonsense mutations in exon 17 by promoting the accumulation of unc-52 isoforms that lack exon 17. In contrast, smu-2 mutants do not suppress the effects of an unc-52 mutation that affects the 5' splice site of exon 16. Required for normal accumulation of smu-1. The sequence is that of Smu-2 suppressor of mec-8 and unc-52 protein from Caenorhabditis elegans.